The chain runs to 327 residues: GMP reductase (327 aa).

Cys176 functions as the Thioimidate intermediate in the catalytic mechanism. 205-228 contributes to the NADP(+) binding site; it reads IIADGGIRTHGDIAKSIRFGATMV.

It belongs to the IMPDH/GMPR family. GuaC type 2 subfamily.

It catalyses the reaction IMP + NH4(+) + NADP(+) = GMP + NADPH + 2 H(+). Catalyzes the irreversible NADPH-dependent deamination of GMP to IMP. It functions in the conversion of nucleobase, nucleoside and nucleotide derivatives of G to A nucleotides, and in maintaining the intracellular balance of A and G nucleotides. This Streptococcus equi subsp. equi (strain 4047) protein is GMP reductase.